Reading from the N-terminus, the 101-residue chain is Non-structural protein 7a (101 aa).

Residues 1 to 43 (MLVFVHAVLVTALILLLIGRIQLLERLLLSHLLNLTTVSNVLG) form the signal peptide. Residues 76–96 (LLVVVLRVIFLVLLGFSCYTL) traverse the membrane as a helical segment.

It belongs to the coronaviruses ns7/ns7a protein family.

It localises to the host membrane. May function in the formation of membrane-bound replication complexes or in the assembly of the virus. This Felidae (cat family) protein is Non-structural protein 7a.